The sequence spans 264 residues: Thymidylate synthase (264 aa).

Residue R21 coordinates dUMP. H51 is a binding site for (6R)-5,10-methylene-5,6,7,8-tetrahydrofolate. 126–127 provides a ligand contact to dUMP; sequence RR. The active-site Nucleophile is the C146. DUMP is bound by residues 166–169, N177, and 207–209; these read RSAD and HIY. D169 contacts (6R)-5,10-methylene-5,6,7,8-tetrahydrofolate. A (6R)-5,10-methylene-5,6,7,8-tetrahydrofolate-binding site is contributed by S263.

The protein belongs to the thymidylate synthase family. Bacterial-type ThyA subfamily. As to quaternary structure, homodimer.

It is found in the cytoplasm. The enzyme catalyses dUMP + (6R)-5,10-methylene-5,6,7,8-tetrahydrofolate = 7,8-dihydrofolate + dTMP. It functions in the pathway pyrimidine metabolism; dTTP biosynthesis. Catalyzes the reductive methylation of 2'-deoxyuridine-5'-monophosphate (dUMP) to 2'-deoxythymidine-5'-monophosphate (dTMP) while utilizing 5,10-methylenetetrahydrofolate (mTHF) as the methyl donor and reductant in the reaction, yielding dihydrofolate (DHF) as a by-product. This enzymatic reaction provides an intracellular de novo source of dTMP, an essential precursor for DNA biosynthesis. This Bacillus velezensis (strain DSM 23117 / BGSC 10A6 / LMG 26770 / FZB42) (Bacillus amyloliquefaciens subsp. plantarum) protein is Thymidylate synthase.